The following is a 20-amino-acid chain: Basic phospholipase A2 cannitoxin alpha chain (20 aa).

As to quaternary structure, heterotrimer of alpha, beta, and gamma chains; non-covalently linked. Requires Ca(2+) as cofactor. In terms of tissue distribution, expressed by the venom gland.

It localises to the secreted. It carries out the reaction a 1,2-diacyl-sn-glycero-3-phosphocholine + H2O = a 1-acyl-sn-glycero-3-phosphocholine + a fatty acid + H(+). Heterotrimer: Snake venom phospholipase A2 (PLA2) heterotrimer that acts as a potent presynaptic neurotoxin by blocking synaptic transmission and synaptic vesicle recycling. Enzymatic activity is essential for the neurotoxic effects. May act by binding in a calcium-dependent fashion to neurotonal pentraxin-1 (NPTX1) and neurotonal pentraxin-2 (NPTX2), but not to neuronal pentraxin receptor (NPTXR). Also binds to taipoxin-associated calcium binding protein 49 (RCN2), a protein localized in the lumen of endoplasmic reticulum. In terms of biological role, monomer (alpha chain): Snake venom phospholipase A2 (PLA2) that possesses a low level of presynaptic activity and the same high enzymatic activity than the heterotrimer. PLA2 catalyzes the calcium-dependent hydrolysis of the 2-acyl groups in 3-sn-phosphoglycerides. The protein is Basic phospholipase A2 cannitoxin alpha chain of Oxyuranus scutellatus canni (Papuan taipan).